Reading from the N-terminus, the 389-residue chain is Phospho-N-acetylmuramoyl-pentapeptide-transferase (389 aa).

The next 11 membrane-spanning stretches (helical) occupy residues 21 to 41 (YITM…LVAG), 71 to 91 (TPTM…LLWA), 97 to 117 (FVWV…MDDY), 134 to 154 (FFWQ…AVSA), 167 to 187 (WVSS…VPFF), 190 to 210 (VSYP…IVGT), 222 to 242 (GLAI…AYVV), 259 to 279 (AAEL…FLWF), 286 to 306 (VFMG…IAVI), 311 to 331 (IVLF…MMQV), and 366 to 386 (QVVV…LSTL).

This sequence belongs to the glycosyltransferase 4 family. MraY subfamily. Requires Mg(2+) as cofactor.

The protein resides in the cell inner membrane. The enzyme catalyses UDP-N-acetyl-alpha-D-muramoyl-L-alanyl-gamma-D-glutamyl-meso-2,6-diaminopimeloyl-D-alanyl-D-alanine + di-trans,octa-cis-undecaprenyl phosphate = di-trans,octa-cis-undecaprenyl diphospho-N-acetyl-alpha-D-muramoyl-L-alanyl-D-glutamyl-meso-2,6-diaminopimeloyl-D-alanyl-D-alanine + UMP. Its pathway is cell wall biogenesis; peptidoglycan biosynthesis. Functionally, catalyzes the initial step of the lipid cycle reactions in the biosynthesis of the cell wall peptidoglycan: transfers peptidoglycan precursor phospho-MurNAc-pentapeptide from UDP-MurNAc-pentapeptide onto the lipid carrier undecaprenyl phosphate, yielding undecaprenyl-pyrophosphoryl-MurNAc-pentapeptide, known as lipid I. This chain is Phospho-N-acetylmuramoyl-pentapeptide-transferase, found in Bordetella petrii (strain ATCC BAA-461 / DSM 12804 / CCUG 43448).